The following is a 203-amino-acid chain: Outer-membrane lipoprotein LolB (203 aa).

Positions M1–A17 are cleaved as a signal peptide. C18 is lipidated: N-palmitoyl cysteine. The S-diacylglycerol cysteine moiety is linked to residue C18.

It belongs to the LolB family. As to quaternary structure, monomer.

The protein resides in the cell outer membrane. Its function is as follows. Plays a critical role in the incorporation of lipoproteins in the outer membrane after they are released by the LolA protein. This chain is Outer-membrane lipoprotein LolB, found in Klebsiella pneumoniae subsp. pneumoniae (strain ATCC 700721 / MGH 78578).